The following is a 395-amino-acid chain: Zinc finger protein 385D (395 aa).

The Matrin-type 1 zinc finger occupies 80-110 (ISCNICQLRFNSDSQAAAHYKGTKHAKKLKA). Over residues 169-193 (MTTEITSKVEKSPTTATGNSSCPST) the composition is skewed to polar residues. Positions 169-194 (MTTEITSKVEKSPTTATGNSSCPSTE) are disordered. 2 Matrin-type zinc fingers span residues 204–234 (LYCS…MLEA) and 267–297 (FHCE…RAAG). Residues 282-309 (LKQHISSRRHKDRAAGKPPKPKYSPYNK) form a disordered region.

The protein localises to the nucleus. The polypeptide is Zinc finger protein 385D (ZNF385D) (Homo sapiens (Human)).